Consider the following 321-residue polypeptide: Ferredoxin--NADP reductase (321 aa).

FAD-binding residues include E33, Q41, Y46, V86, L119, D277, and S318.

Belongs to the ferredoxin--NADP reductase type 2 family. Homodimer. FAD serves as cofactor.

The catalysed reaction is 2 reduced [2Fe-2S]-[ferredoxin] + NADP(+) + H(+) = 2 oxidized [2Fe-2S]-[ferredoxin] + NADPH. The sequence is that of Ferredoxin--NADP reductase from Lactococcus lactis subsp. lactis (strain IL1403) (Streptococcus lactis).